Here is a 151-residue protein sequence, read N- to C-terminus: Protein Turandot Z (151 aa).

The signal sequence occupies residues 1–23 (MSRLIHLSFVLALLACLTGTISA).

It belongs to the Turandot family.

It is found in the secreted. A humoral factor that may play a role in stress tolerance. The protein is Protein Turandot Z of Drosophila persimilis (Fruit fly).